The sequence spans 278 residues: tRNA pseudouridine synthase A (278 aa).

The active-site Nucleophile is the aspartate 51. Tyrosine 109 contacts substrate.

Belongs to the tRNA pseudouridine synthase TruA family. In terms of assembly, homodimer.

It catalyses the reaction uridine(38/39/40) in tRNA = pseudouridine(38/39/40) in tRNA. In terms of biological role, formation of pseudouridine at positions 38, 39 and 40 in the anticodon stem and loop of transfer RNAs. The protein is tRNA pseudouridine synthase A of Paracidovorax citrulli (strain AAC00-1) (Acidovorax citrulli).